A 277-amino-acid chain; its full sequence is Large ribosomal subunit protein uL2 (277 aa).

Disordered regions lie at residues 32–58 (KSLT…RGGG) and 225–277 (VAMN…RRNK). Residues 258-277 (YKTRKKKRYSDKFIIKRRNK) are compositionally biased toward basic residues.

This sequence belongs to the universal ribosomal protein uL2 family. As to quaternary structure, part of the 50S ribosomal subunit. Forms a bridge to the 30S subunit in the 70S ribosome.

One of the primary rRNA binding proteins. Required for association of the 30S and 50S subunits to form the 70S ribosome, for tRNA binding and peptide bond formation. It has been suggested to have peptidyltransferase activity; this is somewhat controversial. Makes several contacts with the 16S rRNA in the 70S ribosome. This is Large ribosomal subunit protein uL2 from Borreliella burgdorferi (strain ATCC 35210 / DSM 4680 / CIP 102532 / B31) (Borrelia burgdorferi).